Here is a 587-residue protein sequence, read N- to C-terminus: Xyloglucan-specific endo-beta-1,4-glucanase BoGH9A (587 aa).

Residues 1–19 (MKIVRYIALFGILSGLAVA) form the signal peptide. Cys-20 is lipidated: N-palmitoyl cysteine. The S-diacylglycerol cysteine moiety is linked to residue Cys-20. The active-site Nucleophile is the Asp-185. Residues His-511 and Asp-553 contribute to the active site. The Proton donor role is filled by Glu-562.

The protein belongs to the glycosyl hydrolase 9 (cellulase E) family.

It is found in the cell outer membrane. It catalyses the reaction xyloglucan + H2O = xyloglucan oligosaccharides.. Its pathway is glucan metabolism; xyloglucan degradation. Catalyzes endohydrolysis of 1,4-beta-D-glucosidic linkages in xyloglucan with retention of the beta-configuration of the glycosyl residues in xyloglucan degradation. Cleaves the backbone of the 3 major types of natural xyloglucans (seed galactoxyloglucan from tamarind kernel, dicot fucogalactoxyloglucan from lettuce leaves, and solanaceous arabinogalactoxyloglucan from tomato fruit), to produce xyloglucan oligosaccharides. May be superfluous in xyloglucan degradation compared to BoGH5A (AC A7LXT7), the other Xyloglucan-specific endo-beta-1,4-glucanase. This chain is Xyloglucan-specific endo-beta-1,4-glucanase BoGH9A, found in Bacteroides ovatus (strain ATCC 8483 / DSM 1896 / JCM 5824 / BCRC 10623 / CCUG 4943 / NCTC 11153).